A 326-amino-acid chain; its full sequence is Beta-ketoacyl-[acyl-carrier-protein] synthase III 2 (326 aa).

Active-site residues include Cys-114 and His-251. The tract at residues 252-256 (SANAR) is ACP-binding. Asn-281 is a catalytic residue.

The protein belongs to the thiolase-like superfamily. FabH family. Homodimer.

It localises to the cytoplasm. The enzyme catalyses malonyl-[ACP] + acetyl-CoA + H(+) = 3-oxobutanoyl-[ACP] + CO2 + CoA. Its pathway is lipid metabolism; fatty acid biosynthesis. Catalyzes the condensation reaction of fatty acid synthesis by the addition to an acyl acceptor of two carbons from malonyl-ACP. Catalyzes the first condensation reaction which initiates fatty acid synthesis and may therefore play a role in governing the total rate of fatty acid production. Possesses both acetoacetyl-ACP synthase and acetyl transacylase activities. Its substrate specificity determines the biosynthesis of branched-chain and/or straight-chain of fatty acids. This chain is Beta-ketoacyl-[acyl-carrier-protein] synthase III 2, found in Staphylococcus epidermidis (strain ATCC 12228 / FDA PCI 1200).